Here is a 236-residue protein sequence, read N- to C-terminus: Dual specificity protein phosphatase 15 (236 aa).

A lipid anchor (N-myristoyl glycine) is attached at G2. The 141-residue stretch at G4–Q144 folds into the Tyrosine-protein phosphatase domain. C88 acts as the Phosphocysteine intermediate in catalysis. The tract at residues G178–L213 is disordered. Over residues T181–S194 the composition is skewed to low complexity.

This sequence belongs to the protein-tyrosine phosphatase family. Non-receptor class dual specificity subfamily.

It is found in the cell membrane. The catalysed reaction is O-phospho-L-tyrosyl-[protein] + H2O = L-tyrosyl-[protein] + phosphate. It carries out the reaction O-phospho-L-seryl-[protein] + H2O = L-seryl-[protein] + phosphate. It catalyses the reaction O-phospho-L-threonyl-[protein] + H2O = L-threonyl-[protein] + phosphate. Its function is as follows. May play a role in the regulation of oligodendrocyte differentiation. May play a role in the regulation of myelin formation. Involved in the regulation of Erk1/2 phosphorylation in Schwann cells; the signaling may be linked to the regulation of myelination. May dephosphorylate MAPK13, ATF2, ERBB3, PDGFRB and SNX6. This chain is Dual specificity protein phosphatase 15 (Dusp15), found in Rattus norvegicus (Rat).